The chain runs to 244 residues: Pyridoxine 5'-phosphate synthase (244 aa).

A 3-amino-2-oxopropyl phosphate-binding site is contributed by Asn-12. 14–15 contributes to the 1-deoxy-D-xylulose 5-phosphate binding site; that stretch reads DH. Arg-23 is a binding site for 3-amino-2-oxopropyl phosphate. The active-site Proton acceptor is the His-48. 1-deoxy-D-xylulose 5-phosphate-binding residues include Arg-50 and His-55. Glu-75 acts as the Proton acceptor in catalysis. Residue Thr-105 participates in 1-deoxy-D-xylulose 5-phosphate binding. His-196 (proton donor) is an active-site residue. 3-amino-2-oxopropyl phosphate contacts are provided by residues Gly-197 and 218–219; that span reads GH.

The protein belongs to the PNP synthase family. As to quaternary structure, homooctamer; tetramer of dimers.

Its subcellular location is the cytoplasm. The catalysed reaction is 3-amino-2-oxopropyl phosphate + 1-deoxy-D-xylulose 5-phosphate = pyridoxine 5'-phosphate + phosphate + 2 H2O + H(+). Its pathway is cofactor biosynthesis; pyridoxine 5'-phosphate biosynthesis; pyridoxine 5'-phosphate from D-erythrose 4-phosphate: step 5/5. Catalyzes the complicated ring closure reaction between the two acyclic compounds 1-deoxy-D-xylulose-5-phosphate (DXP) and 3-amino-2-oxopropyl phosphate (1-amino-acetone-3-phosphate or AAP) to form pyridoxine 5'-phosphate (PNP) and inorganic phosphate. The polypeptide is Pyridoxine 5'-phosphate synthase (Alcanivorax borkumensis (strain ATCC 700651 / DSM 11573 / NCIMB 13689 / SK2)).